A 422-amino-acid polypeptide reads, in one-letter code: MDSILVKGNGELRGQIPIAGAKNACLALMPATLLSDEPLTLTNAPRLSDIRTMTQLLQSLGAEVASLQGGQVLALSSHALTDHRADYDIVRKMRASILVLGPMLARDGHAVVSLPGGCAIGARPVDLHLKALEAMGAELDLRDGYIHAKAPAGGLKGARVVFPLVSVGATENALMAATLAKGTTVLENAAREPEIVDLARCLRRMGAQIEGEGSSTITIEGVDRLGGATHPVVTDRIELGTYMLAPAICGGEVELLGGRIELVGAFCEKLDAAGISVEETERGLRVARKNGRVKAVDVMTEPFPGFPTDLQAQMMALLCTAEGTSVLEERIFENRFMHAPELIRMGARIEVHGGTATVTGVEKLRGAPVMATDLRASVSLILAGLAAEGETIVSRVYHLDRGYERVEEKLSACGAQIRRIPG.

Position 22–23 (22–23) interacts with phosphoenolpyruvate; that stretch reads KN. UDP-N-acetyl-alpha-D-glucosamine is bound at residue Arg94. Cys118 (proton donor) is an active-site residue. At Cys118 the chain carries 2-(S-cysteinyl)pyruvic acid O-phosphothioketal. Residues 123 to 127, Asp309, and Ile331 contribute to the UDP-N-acetyl-alpha-D-glucosamine site; that span reads RPVDL.

Belongs to the EPSP synthase family. MurA subfamily.

It is found in the cytoplasm. It catalyses the reaction phosphoenolpyruvate + UDP-N-acetyl-alpha-D-glucosamine = UDP-N-acetyl-3-O-(1-carboxyvinyl)-alpha-D-glucosamine + phosphate. Its pathway is cell wall biogenesis; peptidoglycan biosynthesis. Cell wall formation. Adds enolpyruvyl to UDP-N-acetylglucosamine. In Cereibacter sphaeroides (strain KD131 / KCTC 12085) (Rhodobacter sphaeroides), this protein is UDP-N-acetylglucosamine 1-carboxyvinyltransferase.